The chain runs to 302 residues: Oxygen-dependent coproporphyrinogen-III oxidase (302 aa).

Position 94 (Ser-94) interacts with substrate. Positions 98 and 108 each coordinate a divalent metal cation. His-108 (proton donor) is an active-site residue. Substrate is bound at residue 110-112 (NVR). The a divalent metal cation site is built by His-147 and His-177. Positions 242–277 (YVEFNLVWDRGTLFGLQSGGRTESILMSMPPLVRWE) are important for dimerization. 260–262 (GGR) is a binding site for substrate.

This sequence belongs to the aerobic coproporphyrinogen-III oxidase family. As to quaternary structure, homodimer. The cofactor is a divalent metal cation.

The protein resides in the cytoplasm. It catalyses the reaction coproporphyrinogen III + O2 + 2 H(+) = protoporphyrinogen IX + 2 CO2 + 2 H2O. It functions in the pathway porphyrin-containing compound metabolism; protoporphyrin-IX biosynthesis; protoporphyrinogen-IX from coproporphyrinogen-III (O2 route): step 1/1. In terms of biological role, involved in the heme biosynthesis. Catalyzes the aerobic oxidative decarboxylation of propionate groups of rings A and B of coproporphyrinogen-III to yield the vinyl groups in protoporphyrinogen-IX. This chain is Oxygen-dependent coproporphyrinogen-III oxidase, found in Chromobacterium violaceum (strain ATCC 12472 / DSM 30191 / JCM 1249 / CCUG 213 / NBRC 12614 / NCIMB 9131 / NCTC 9757 / MK).